Reading from the N-terminus, the 486-residue chain is UDP-N-acetylmuramoyl-L-alanyl-D-glutamate--2,6-diaminopimelate ligase (486 aa).

Residue S33 participates in UDP-N-acetyl-alpha-D-muramoyl-L-alanyl-D-glutamate binding. 110–116 (GTNGKTS) contacts ATP. Residues 152-153 (TT), S179, Q185, and R187 contribute to the UDP-N-acetyl-alpha-D-muramoyl-L-alanyl-D-glutamate site. K219 bears the N6-carboxylysine mark. Meso-2,6-diaminopimelate-binding positions include R383, 407-410 (DNPR), G455, and E459. The Meso-diaminopimelate recognition motif motif lies at 407–410 (DNPR).

This sequence belongs to the MurCDEF family. MurE subfamily. Requires Mg(2+) as cofactor. Carboxylation is probably crucial for Mg(2+) binding and, consequently, for the gamma-phosphate positioning of ATP.

It is found in the cytoplasm. The catalysed reaction is UDP-N-acetyl-alpha-D-muramoyl-L-alanyl-D-glutamate + meso-2,6-diaminopimelate + ATP = UDP-N-acetyl-alpha-D-muramoyl-L-alanyl-gamma-D-glutamyl-meso-2,6-diaminopimelate + ADP + phosphate + H(+). It participates in cell wall biogenesis; peptidoglycan biosynthesis. Catalyzes the addition of meso-diaminopimelic acid to the nucleotide precursor UDP-N-acetylmuramoyl-L-alanyl-D-glutamate (UMAG) in the biosynthesis of bacterial cell-wall peptidoglycan. This chain is UDP-N-acetylmuramoyl-L-alanyl-D-glutamate--2,6-diaminopimelate ligase, found in Zymomonas mobilis subsp. mobilis (strain ATCC 31821 / ZM4 / CP4).